The following is a 183-amino-acid chain: Ferritin heavy chain (183 aa).

M1 is subject to N-acetylmethionine. N-acetylthreonine; in Ferritin heavy chain, N-terminally processed is present on T2. Residues Q11–G160 form the Ferritin-like diiron domain. Residues E28, E63, H66, E108, and Q142 each contribute to the Fe cation site. A phosphoserine mark is found at S179 and S183.

This sequence belongs to the ferritin family. In terms of assembly, oligomer of 24 subunits. There are two types of subunits: L (light) chain and H (heavy) chain. The major chain can be light or heavy, depending on the species and tissue type. The functional molecule forms a roughly spherical shell with a diameter of 12 nm and contains a central cavity into which the insoluble mineral iron core is deposited. Interacts with NCOA4; NCOA4 promotes targeting of the iron-binding ferritin complex to autolysosomes following starvation or iron depletion.

It is found in the cytoplasm. The protein resides in the lysosome. The protein localises to the cytoplasmic vesicle. Its subcellular location is the autophagosome. It carries out the reaction 4 Fe(2+) + O2 + 4 H(+) = 4 Fe(3+) + 2 H2O. Stores iron in a soluble, non-toxic, readily available form. Important for iron homeostasis. Has ferroxidase activity. Iron is taken up in the ferrous form and deposited as ferric hydroxides after oxidation. Also plays a role in delivery of iron to cells. Mediates iron uptake in capsule cells of the developing kidney. Delivery to lysosomes is mediated by the cargo receptor NCOA4 for autophagic degradation and release of iron. This Canis lupus familiaris (Dog) protein is Ferritin heavy chain (FTH1).